Here is a 141-residue protein sequence, read N- to C-terminus: Hemoglobin subunit alpha (141 aa).

The segment at Val1–Gly22 is disordered. The Globin domain occupies Val1 to Arg141. Residue His58 participates in O2 binding. Heme b is bound at residue His87.

This sequence belongs to the globin family. Heterotetramer of two alpha chains and two beta chains. As to expression, red blood cells.

In terms of biological role, involved in oxygen transport from the lung to the various peripheral tissues. The chain is Hemoglobin subunit alpha (HBA) from Vipera aspis (Aspic viper).